Reading from the N-terminus, the 416-residue chain is Serine carboxypeptidase S10 family member 1 (416 aa).

The first 20 residues, 1 to 20, serve as a signal peptide directing secretion; sequence MMKLLFIIISIIFVINVSNS. N-linked (GlcNAc...) asparagine glycans are attached at residues Asn33 and Asn84. Ser156 is an active-site residue. N-linked (GlcNAc...) asparagine glycosylation is found at Asn235, Asn273, and Asn295. Residue Asp338 is part of the active site. A glycan (N-linked (GlcNAc...) asparagine) is linked at Asn385. His396 is an active-site residue.

Belongs to the peptidase S10 family.

It is found in the secreted. Probable carboxypeptidase. This is Serine carboxypeptidase S10 family member 1 from Dictyostelium discoideum (Social amoeba).